A 538-amino-acid chain; its full sequence is Chaperonin GroEL 1 (538 aa).

ATP contacts are provided by residues 30–33 (TLGP), lysine 51, 87–91 (DGTTT), glycine 415, 479–481 (NAA), and aspartate 495.

It belongs to the chaperonin (HSP60) family. Forms a cylinder of 14 subunits composed of two heptameric rings stacked back-to-back. Interacts with the co-chaperonin GroES.

The protein localises to the cytoplasm. The catalysed reaction is ATP + H2O + a folded polypeptide = ADP + phosphate + an unfolded polypeptide.. Functionally, together with its co-chaperonin GroES, plays an essential role in assisting protein folding. The GroEL-GroES system forms a nano-cage that allows encapsulation of the non-native substrate proteins and provides a physical environment optimized to promote and accelerate protein folding. This is Chaperonin GroEL 1 from Chromobacterium violaceum (strain ATCC 12472 / DSM 30191 / JCM 1249 / CCUG 213 / NBRC 12614 / NCIMB 9131 / NCTC 9757 / MK).